A 454-amino-acid chain; its full sequence is L-cysteine desulfhydrase-like protein lolT1 (454 aa).

Residue lysine 227 is modified to N6-(pyridoxal phosphate)lysine.

This sequence belongs to the class-V pyridoxal-phosphate-dependent aminotransferase family. The cofactor is pyridoxal 5'-phosphate.

It participates in alkaloid biosynthesis. In terms of biological role, L-cysteine desulfhydrase-like protein; part of the gene cluster that mediates the biosynthesis of loline alkaloids, potent insecticidal agents composed of a pyrrolizidine ring system and an uncommon ether bridge linking carbons 2 and 7. Lolines are structurally differentiated by the various modifications of the L-amino group and include norloline, loline, N-methylloline, N-acetylloline, N-acetylnorloline, and N-formylloline. The first committed step is the condensation of O-acetyl-L-homoserine (derived from L-aspartic acid) and L-proline, probably catalyzed by the gamma-type pyridoxal 5'-phosphate(PLP)-dependent enzyme lolC, to give the diamino diacid, NACPP. Ensuing cyclization, decarboxylation, and acetylation steps yield 1-exo-acetamidopyrrolizidine (AcAP). LolO is required for installation of the ether bridge upon the pathway intermediate, 1-exo-acetamidopyrrolizidine (AcAP). In sequential 2-oxoglutarate- and O(2)-consuming steps, lolO removes hydrogens from C2 and C7 of AcAP to form both carbon-oxygen bonds in N-acetylnorloline (NANL), the precursor to all other lolines. The enzymes lolD, lolE, lolF and lolT have also been proposed to be involved in the ether-bridge installation. Further processing of the exocyclic moiety of NANL by fungal N-acetamidase (LolN), methyltransferase (LolM), and cytochrome P450 (LolP) enzymes, with occasional involvement of a plant acetyltransferase, generates the other known lolines. LolN transforms NANL to norlonine which is monomethylated and dimethylated to respectively lonine and N-methyllonine (NML) by lolM. LolP catalyzes hydroxylation of the methyl group in N-methylloline (NML) and further oxygenation to N-formylloline (NFL). A plant acetyltransferase is responsible for the acetylation of loline to form N-acetylloline (NAL). LolA might interact with aspartate kinase to prevent feedback inhibition of its activity by these end products and thereby promote production of L-homoserine from L-aspartate. This chain is L-cysteine desulfhydrase-like protein lolT1, found in Epichloe uncinata (Endophyte fungus).